A 212-amino-acid chain; its full sequence is Ribonuclease HII (212 aa).

The 205-residue stretch at 2 to 206 (TPLVGVDEAG…CERIRAEAEQ (205 aa)) folds into the RNase H type-2 domain. A divalent metal cation-binding residues include Asp-8, Glu-9, and Asp-101.

The protein belongs to the RNase HII family. Requires Mn(2+) as cofactor. It depends on Mg(2+) as a cofactor.

It localises to the cytoplasm. The enzyme catalyses Endonucleolytic cleavage to 5'-phosphomonoester.. Its function is as follows. Endonuclease that specifically degrades the RNA of RNA-DNA hybrids. This chain is Ribonuclease HII, found in Natronomonas pharaonis (strain ATCC 35678 / DSM 2160 / CIP 103997 / JCM 8858 / NBRC 14720 / NCIMB 2260 / Gabara) (Halobacterium pharaonis).